The following is a 181-amino-acid chain: Protein Ves (181 aa).

Belongs to the Ves family.

In Cronobacter sakazakii (strain ATCC BAA-894) (Enterobacter sakazakii), this protein is Protein Ves.